The chain runs to 988 residues: MDIRCVNWFENKGETKYIYLKAINRESNVIFIRFNYYYHYVYDASKELEYKPNECIDLGPFKIINIDEKLSTDIRYVEPRNYYTSELVLVKDLKRNREKQYLQEYLDITWFYLLNNITPDGCYKIDIEHLTPIKKDCYHCDDVSKVFIQEIPIFEVKFTYLLFDIECQFDKKFPSVFVNPISHISCWIIDKVTEYKFTLINTDILPDKEPSILHHKDFSPKDRITYCTEIVMLLIMKKILEHRFDFVITFNGNNFDIRYISGRLEILEKSFIYFSLPDATETVKLKIFERFVTGGTFTNKTYHINNNNGVMFFDLYAFIQKTERLDSYKLDSISKNIFNCNVAIKEIDDTILTLEATVKDNSKDKLSIFSRVLETGNYITIGDNNVSKIVYKDINQDSFIIKVISNRDYEIGSVHNISFGKDDVDLKDMYKNYNLEIALDMERYCIHDACLCKYIWDYYRVPSKINAASSTYLLPQSLALEYRASTLIKGPLLKLLLEERVIYTRKITKVRYPYIGGKVFLPSQKTFENNVMIFDYNSLYPNVCIYGNLSPEKLVCILLNSNKLESEINMRTIKSKYPYPEYVCVSCESRLSDYYSEIIVYDRREKGIIPKLLEMFIGKRKEYKNLLKTASTTIESTLYDSLQYIYKIIANSVYGLMGFSNSTLYSYSSAKTCTTIGRNMITYLDSIMNGAVWENDKLILADFPRNIFSGETMFNKELEVPNMNESFKFRSVYGDTDSIFSEISTKDIEKTAKIAKHLEHIINTKILHANFKIEFEAIYTQLILQSKKKYTTIKYLANYKPGDKPIRVNKGTSETRRDVALFHKHMIQRYKDMLMKLLMESKGQQEITRLILQSLETDMISEFTHNREFEKYLLSRKHHNNYKSATHSNFELVKRYNLENTEKIEIGERYYYIYICDISLPWQKKLCNILSYEVIADSKFYLPKDKRIFYEIYFKRIASEVVNLLTDKTQCMLFFSRLFGTKPVFSSD.

It belongs to the DNA polymerase type-B family. As to quaternary structure, interacts with A20. Component of the Uracil-DNA glycosylase(UDG)-A20-polymerase complex; A20 and UDG form a heterodimeric processivity factor that associates with E9 to form the processive polymerase holoenzyme.

The enzyme catalyses DNA(n) + a 2'-deoxyribonucleoside 5'-triphosphate = DNA(n+1) + diphosphate. Functionally, catalyzes DNA synthesis. Acquires processivity by associating with a heterodimeric processivity factor comprised of the viral A20 and D4 proteins, thereby forming the DNA polymerase holoenzyme. Displays 3'- to 5' exonuclease activity. Might participate in viral DNA recombination. Does not perform translesion synthesis across an abasic site. In Vertebrata (FPV), this protein is DNA polymerase (POL).